Consider the following 217-residue polypeptide: tRNA (guanine-N(7)-)-methyltransferase (217 aa).

Residues E44, D69, D96, and D118 each coordinate S-adenosyl-L-methionine. Residue D118 is part of the active site. K122 serves as a coordination point for substrate. An interaction with RNA region spans residues 124 to 129; the sequence is RHEKRR. Substrate is bound by residues D154 and 193-196; that span reads TEYE.

Belongs to the class I-like SAM-binding methyltransferase superfamily. TrmB family.

The enzyme catalyses guanosine(46) in tRNA + S-adenosyl-L-methionine = N(7)-methylguanosine(46) in tRNA + S-adenosyl-L-homocysteine. The protein operates within tRNA modification; N(7)-methylguanine-tRNA biosynthesis. Functionally, catalyzes the formation of N(7)-methylguanine at position 46 (m7G46) in tRNA. The protein is tRNA (guanine-N(7)-)-methyltransferase of Lactococcus lactis subsp. lactis (strain IL1403) (Streptococcus lactis).